The following is a 332-amino-acid chain: MSDFAFFALETLIKCIIIIAIFASLAGLATYAERKVLAYFQRRIGPDMVGPFGLIQLVADMIKLFTKEDIIPSNSQKFIFAIAPLISAICAFVSLAAIPMLPEFTLFGRVIQPIVADINVALLFVIGTSGLCFYAVFLGGLASNNKWSILGAARGLVSIISYESVGALALIAIIMLVGSFSLVDINNYQSDGFFSWLIFKQPLAFVLFIIALFIETNRTPLCLTENDAEIVAGYGTEYSGLRWGMFFIGEYTSMIAGAILVTLLFLGGFNSFWIIPGWIMMIVKSSFIFFWYFWARAAFPQLRPDQVMKMCYLILIPLAVLNLLITALTVLL.

9 helical membrane passes run 4 to 24, 44 to 64, 78 to 98, 120 to 140, 165 to 185, 194 to 214, 255 to 275, 279 to 299, and 312 to 332; these read FAFF…IFAS, IGPD…MIKL, FIFA…LAAI, VALL…FLGG, VGAL…LVDI, FSWL…ALFI, IAGA…FWII, IMMI…RAAF, and YLIL…TVLL.

Belongs to the complex I subunit 1 family. As to quaternary structure, NDH-1 is composed of 14 different subunits. Subunits NuoA, H, J, K, L, M, N constitute the membrane sector of the complex.

It localises to the cell inner membrane. The catalysed reaction is a quinone + NADH + 5 H(+)(in) = a quinol + NAD(+) + 4 H(+)(out). NDH-1 shuttles electrons from NADH, via FMN and iron-sulfur (Fe-S) centers, to quinones in the respiratory chain. The immediate electron acceptor for the enzyme in this species is believed to be ubiquinone. Couples the redox reaction to proton translocation (for every two electrons transferred, four hydrogen ions are translocated across the cytoplasmic membrane), and thus conserves the redox energy in a proton gradient. This subunit may bind ubiquinone. The chain is NADH-quinone oxidoreductase subunit H from Campylobacter jejuni subsp. jejuni serotype O:2 (strain ATCC 700819 / NCTC 11168).